The primary structure comprises 373 residues: NADH-quinone oxidoreductase subunit D (373 aa).

Belongs to the complex I 49 kDa subunit family. NDH-1 is composed of 14 different subunits. Subunits NuoB, C, D, E, F, and G constitute the peripheral sector of the complex.

It is found in the cell inner membrane. The catalysed reaction is a quinone + NADH + 5 H(+)(in) = a quinol + NAD(+) + 4 H(+)(out). NDH-1 shuttles electrons from NADH, via FMN and iron-sulfur (Fe-S) centers, to quinones in the respiratory chain. The immediate electron acceptor for the enzyme in this species is believed to be ubiquinone. Couples the redox reaction to proton translocation (for every two electrons transferred, four hydrogen ions are translocated across the cytoplasmic membrane), and thus conserves the redox energy in a proton gradient. The polypeptide is NADH-quinone oxidoreductase subunit D (Syntrophobacter fumaroxidans (strain DSM 10017 / MPOB)).